The following is a 1138-amino-acid chain: 2'-5'-oligoadenylate synthase 3 (1138 aa).

Position 1 is an N-acetylmethionine (Met-1). Residues 6 to 341 (TPAGALDKLV…GVLVQPWEGP (336 aa)) form an OAS domain 1 region. 2 interaction with dsRNA regions span residues 12–56 (DKLV…VIRI) and 185–199 (EPRK…AKLK). Residues 342–462 (GLPRAGILDL…GSRMSPDLSQ (121 aa)) form a linker region. The span at 370–379 (LAVQSKERSQ) shows a compositional bias: basic and acidic residues. Disordered regions lie at residues 370-403 (LAVQ…NPSA) and 434-459 (TQST…MSPD). The span at 447 to 459 (SSISTAGSRMSPD) shows a compositional bias: polar residues. OAS domain stretches follow at residues 463-793 (IPSK…PWDV) and 801-1135 (TLAE…WPVK). Position 855 (Ser-855) interacts with ATP. Mg(2+) contacts are provided by Asp-867, Asp-869, and Asp-939. ATP is bound by residues Arg-998, Lys-1001, and Gln-1020.

The protein belongs to the 2-5A synthase family. In terms of assembly, monomer. Mg(2+) is required as a cofactor. Intestine.

It is found in the cytoplasm. Its subcellular location is the nucleus. The catalysed reaction is 3 ATP = 5'-triphosphoadenylyl-(2'-&gt;5')-adenylyl-(2'-&gt;5')-adenosine + 2 diphosphate. Produced as a latent enzyme which is activated by dsRNA generated during the course of viral infection. Strongly activated by long dsRNAs at least 50 nucleotides in length. ssRNA does not activate the enzyme. Its function is as follows. Interferon-induced, dsRNA-activated antiviral enzyme which plays a critical role in cellular innate antiviral response. In addition, it may also play a role in other cellular processes such as apoptosis, cell growth, differentiation and gene regulation. Synthesizes preferentially dimers of 2'-5'-oligoadenylates (2-5A) from ATP which then bind to the inactive monomeric form of ribonuclease L (RNase L) leading to its dimerization and subsequent activation. Activation of RNase L leads to degradation of cellular as well as viral RNA, resulting in the inhibition of protein synthesis, thus terminating viral replication. Can mediate the antiviral effect via the classical RNase L-dependent pathway or an alternative antiviral pathway independent of RNase L. The protein is 2'-5'-oligoadenylate synthase 3 (Oas3) of Mus musculus (Mouse).